The sequence spans 319 residues: Olfactory receptor 56B4 (319 aa).

Topologically, residues 1-31 (MDTSTSVTYDSSLQISQFILMGLPGIHEWQH) are extracellular. The chain crosses the membrane as a helical span at residues 32 to 52 (WLSLPLTLLYLLALGANLLII). The Cytoplasmic portion of the chain corresponds to 53 to 60 (ITIQHETV). A helical transmembrane segment spans residues 61–81 (LHEPMYHLLGILAVVDIGLAT). The Extracellular segment spans residues 82–105 (TIMPKILAIFWFDAKAISLPMCFA). The cysteines at positions 103 and 195 are disulfide-linked. A helical transmembrane segment spans residues 106–126 (QIYAIHCFFCIESGIFLCMAV). Topologically, residues 127–145 (DRYIAICRPLQYPSIVTKA) are cytoplasmic. Residues 146 to 166 (FVFKATGFIMLRNGLLTIPVP) traverse the membrane as a helical segment. Topologically, residues 167 to 202 (ILAAQRHYCSRNEIEHCLCSNLGVISLACDDITVNK) are extracellular. A helical transmembrane segment spans residues 203–223 (FYQLMLAWVLVGSDMALVFSS). Topologically, residues 224-243 (YAVILHSVLRLNSAEAMSKA) are cytoplasmic. Residues 244–263 (LSTCSSHLILILFHTGIIVL) traverse the membrane as a helical segment. The Extracellular segment spans residues 264-277 (SVTHLAEKKIPLIP). The chain crosses the membrane as a helical span at residues 278 to 298 (VFLNVLHNVIPPALNPLACAL). Residues 299–319 (RMHKLRLGFQRLLGLGQDVSK) are Cytoplasmic-facing.

Belongs to the G-protein coupled receptor 1 family.

The protein localises to the cell membrane. Functionally, odorant receptor. In Homo sapiens (Human), this protein is Olfactory receptor 56B4 (OR56B4).